A 264-amino-acid chain; its full sequence is uncharacterized protein (264 aa).

Positions 1 to 16 (MKGKSALTLLLAGIFS) are cleaved as a signal peptide. Cys17 carries N-palmitoyl cysteine lipidation. Residue Cys17 is the site of S-diacylglycerol cysteine attachment.

The protein resides in the cell inner membrane. This is an uncharacterized protein from Escherichia coli (strain K12).